The following is a 440-amino-acid chain: Adenylosuccinate lyase (440 aa).

Residues 4 to 5 (RY), 67 to 69 (KHD), and 93 to 94 (TS) each bind N(6)-(1,2-dicarboxyethyl)-AMP. H141 serves as the catalytic Proton donor/acceptor. Q212 lines the N(6)-(1,2-dicarboxyethyl)-AMP pocket. The active-site Proton donor/acceptor is S262. Residues S263, 268–270 (KRN), N276, and 307–311 (SVERF) contribute to the N(6)-(1,2-dicarboxyethyl)-AMP site.

The protein belongs to the lyase 1 family. Adenylosuccinate lyase subfamily. As to quaternary structure, homotetramer. Residues from neighboring subunits contribute catalytic and substrate-binding residues to each active site.

It carries out the reaction N(6)-(1,2-dicarboxyethyl)-AMP = fumarate + AMP. It catalyses the reaction (2S)-2-[5-amino-1-(5-phospho-beta-D-ribosyl)imidazole-4-carboxamido]succinate = 5-amino-1-(5-phospho-beta-D-ribosyl)imidazole-4-carboxamide + fumarate. It participates in purine metabolism; AMP biosynthesis via de novo pathway; AMP from IMP: step 2/2. The protein operates within purine metabolism; IMP biosynthesis via de novo pathway; 5-amino-1-(5-phospho-D-ribosyl)imidazole-4-carboxamide from 5-amino-1-(5-phospho-D-ribosyl)imidazole-4-carboxylate: step 2/2. Functionally, catalyzes two reactions in de novo purine nucleotide biosynthesis. Catalyzes the breakdown of 5-aminoimidazole- (N-succinylocarboxamide) ribotide (SAICAR or 2-[5-amino-1-(5-phospho-beta-D-ribosyl)imidazole-4-carboxamido]succinate) to 5-aminoimidazole-4-carboxamide ribotide (AICAR or 5-amino-1-(5-phospho-beta-D-ribosyl)imidazole-4-carboxamide) and fumarate, and of adenylosuccinate (ADS or N(6)-(1,2-dicarboxyethyl)-AMP) to adenosine monophosphate (AMP) and fumarate. In Helicobacter pylori (strain J99 / ATCC 700824) (Campylobacter pylori J99), this protein is Adenylosuccinate lyase (purB).